Consider the following 484-residue polypeptide: MVGASGSDAGAISGSGNQRLPTLTDLLYQLATRAVTSEELVRRSLRAIDVSQPTLNAFRVVLTESALADAAAADKRRAAGDTAPLLGIPIAVKDDVDVAGVPTAFGTQGYVAPATDDCEVVRRLKAAGAVIVGKTNTCELGQWPFTSGPGFGHTRNPWSRRHTPGGSSGGSAAAVAAGLVTAAIGSDGAGSIRIPAAWTHLVGIKPQRGRISTWPLPEAFNGVTVNGVLARTVEDAALVLDAASGNVEGDRHQPPPVTVSDFVGIAPGPLKIALSTHFPYTGFRAKLHPEILAATQRVGDQLELLGHTVVKGNPDYGLRLSWNFLARSTAGLWEWAERLGDEVTLDRRTVSNLRMGHVLSQAILRSARRHEAADQRRVGSIFDIVDVVLAPTTAQPPPMARAFDRLGSFGTDRAIIAACPSTWPWNLLGWPSINVPAGFTSDGLPIGVQLMGPANSEGMLISLAAELEAVSGWATKQPQVWWTS.

Catalysis depends on charge relay system residues K93 and S167. S191 serves as the catalytic Acyl-ester intermediate.

The protein belongs to the amidase family.

The enzyme catalyses a monocarboxylic acid amide + H2O = a monocarboxylate + NH4(+). The chain is Putative amidase AmiA2 (amiA2) from Mycobacterium bovis (strain ATCC BAA-935 / AF2122/97).